The following is a 507-amino-acid chain: ATP synthase subunit alpha, chloroplastic (507 aa).

170–177 (GDRQTGKT) contributes to the ATP binding site.

It belongs to the ATPase alpha/beta chains family. As to quaternary structure, F-type ATPases have 2 components, CF(1) - the catalytic core - and CF(0) - the membrane proton channel. CF(1) has five subunits: alpha(3), beta(3), gamma(1), delta(1), epsilon(1). CF(0) has four main subunits: a, b, b' and c.

The protein localises to the plastid. It is found in the chloroplast thylakoid membrane. It catalyses the reaction ATP + H2O + 4 H(+)(in) = ADP + phosphate + 5 H(+)(out). In terms of biological role, produces ATP from ADP in the presence of a proton gradient across the membrane. The alpha chain is a regulatory subunit. The protein is ATP synthase subunit alpha, chloroplastic of Nicotiana sylvestris (Wood tobacco).